The chain runs to 652 residues: p-hydroxybenzoic acid efflux pump subunit AaeB (652 aa).

The next 11 helical transmembrane spans lie at 8-28 (FPIKLTFAIVLSLLIGFHFNL), 34-54 (AVMTACIVAGGTAFAAGGDPF), 64-84 (LRIIGTFLGCIAALTIMIATI), 88-108 (ALMMLLCCMWAGLCVWLSSLI), 118-138 (LAGYTALIIVVSVDANGSVLL), 149-169 (EIIIGIVCAILADMLFSPRSV), 367-387 (LFWLWTGWASGSGAMVMLAVI), 404-424 (FLYGMIVAIPLGSLYYMVIMP), 429-449 (SMLLLCISLGVMAFIGGILIQ), 453-473 (IGTLGGLVGTINIITLDNPMT), and 480-500 (LDNALGQAIGCFLALLVILLI).

The protein belongs to the aromatic acid exporter ArAE (TC 2.A.85) family.

It localises to the cell inner membrane. In terms of biological role, forms an efflux pump with AaeA. Could function as a metabolic relief valve, allowing to eliminate certain compounds when they accumulate to high levels in the cell. This chain is p-hydroxybenzoic acid efflux pump subunit AaeB, found in Erwinia billingiae (strain Eb661).